We begin with the raw amino-acid sequence, 202 residues long: Na(+)-translocating NADH-quinone reductase subunit E (202 aa).

6 helical membrane-spanning segments follow: residues 11-31 (AVFV…FIAI), 35-55 (VETA…TMPV), 79-99 (LSFL…QILE), 114-134 (GVFL…LFMV), 144-164 (TVYG…LAGI), and 180-200 (LGIT…FSGV).

The protein belongs to the NqrDE/RnfAE family. As to quaternary structure, composed of six subunits; NqrA, NqrB, NqrC, NqrD, NqrE and NqrF.

The protein resides in the cell inner membrane. It catalyses the reaction a ubiquinone + n Na(+)(in) + NADH + H(+) = a ubiquinol + n Na(+)(out) + NAD(+). Its function is as follows. NQR complex catalyzes the reduction of ubiquinone-1 to ubiquinol by two successive reactions, coupled with the transport of Na(+) ions from the cytoplasm to the periplasm. NqrA to NqrE are probably involved in the second step, the conversion of ubisemiquinone to ubiquinol. In Ectopseudomonas mendocina (strain ymp) (Pseudomonas mendocina), this protein is Na(+)-translocating NADH-quinone reductase subunit E.